An 863-amino-acid polypeptide reads, in one-letter code: ATP-dependent helicase Lhr-Core protein 2 (863 aa).

ATP is bound by residues Phe-30, Gln-37, Lys-60, Thr-61, Asp-179, Glu-180, Arg-377, and His-380. Residues 41 to 234 (VIEIHKGENV…FVFGFNDDGT (194 aa)) enclose the Helicase ATP-binding domain. Residues 179-182 (DEVH) carry the DEAH box motif. The region spanning 275–424 (RLDELIEQHR…RIKIPQNPLD (150 aa)) is the Helicase C-terminal domain. The WH domain stretch occupies residues 418–512 (IPQNPLDVLV…AIYYMNTGTI (95 aa)). Residues 513 to 863 (PDEAKIEVYT…KIMAMIGELE (351 aa)) are domain 4.

This sequence belongs to the Lhr helicase family. Lhr-Core subfamily. Monomer.

The catalysed reaction is ATP + H2O = ADP + phosphate + H(+). With respect to regulation, unwinding of dsRNA duplexes is inhibited by AMP-PMP and ATP-gamma-S. In terms of biological role, a DNA:RNA helicase with a significant strand annealing activity, probably involved in DNA repair and RNA transactions. In vitro has a slow helicase activity with a preference for 3'-overhang duplexes; displaces RNA from 3'-overhang DNA:RNA or RNA:RNA duplexes. 3'-tailed double-stranded (ds)DNA is not unwound. The slow helicase activity on RNA duplexes is ATP-independent. Has strand annealing properties in the absence of ATP; forms 3'-overhang DNA:RNA, 3'-overhang dsRNA and 3'-overhang dsDNA duplexes but not 5'-overhang duplexes. A nucleic acid-dependent ATPase; single-stranded (ss)DNA and RNA are equally stimulatory. Binds ssDNA, RNA, dsDNA and dsRNA duplexes. This is ATP-dependent helicase Lhr-Core protein 2 from Thermococcus barophilus (strain DSM 11836 / MP).